The primary structure comprises 215 residues: Adenylate kinase (215 aa).

10–15 (GSGKGT) lines the ATP pocket. An NMP region spans residues 30 to 59 (STGDILREHVRNGTELGKEAKKYMDAGQLV). Residues threonine 31, arginine 36, 57-59 (QLV), 85-88 (GYPR), and glutamine 92 each bind AMP. The tract at residues 126–162 (GRRMCKCGRSYHIIFNPPKVPGKCDECGGELYHRDDD) is LID. Residue arginine 127 coordinates ATP. Cysteine 130 and cysteine 132 together coordinate Zn(2+). Position 135-136 (135-136 (SY)) interacts with ATP. Zn(2+) is bound by residues cysteine 149 and cysteine 152. 2 residues coordinate AMP: arginine 159 and arginine 170. Glycine 198 lines the ATP pocket.

The protein belongs to the adenylate kinase family. Monomer.

The protein localises to the cytoplasm. It carries out the reaction AMP + ATP = 2 ADP. It participates in purine metabolism; AMP biosynthesis via salvage pathway; AMP from ADP: step 1/1. Catalyzes the reversible transfer of the terminal phosphate group between ATP and AMP. Plays an important role in cellular energy homeostasis and in adenine nucleotide metabolism. The chain is Adenylate kinase from Methanothrix thermoacetophila (strain DSM 6194 / JCM 14653 / NBRC 101360 / PT) (Methanosaeta thermophila).